The following is a 507-amino-acid chain: Glycine, alanine and asparagine-rich protein (507 aa).

The N-terminal stretch at 1-17 is a signal peptide; that stretch reads MLRVPLLVLCLALSVGA. Positions 158 to 185 form a coiled coil; that stretch reads SAQALASATAELQAAQDAYDQASAYAEA. Residues 462–498 are compositionally biased toward gly residues; the sequence is GNGNGGNGRNGNGGNGRNGNGGNGGNGNGRNGRGGRY. The tract at residues 462–507 is disordered; the sequence is GNGNGGNGRNGNGGNGRNGNGGNGGNGNGRNGRGGRYYYGSSDYYY.

Component of the acid-soluble and acid-insoluble organic matrix of calcified shell layers (at protein level).

It localises to the secreted. In Haliotis asinina (Donkey's ear abalone), this protein is Glycine, alanine and asparagine-rich protein.